The primary structure comprises 272 residues: Ribosomal RNA small subunit methyltransferase A (272 aa).

S-adenosyl-L-methionine contacts are provided by N27, L29, G54, E75, D97, and N117.

It belongs to the class I-like SAM-binding methyltransferase superfamily. rRNA adenine N(6)-methyltransferase family. RsmA subfamily.

It is found in the cytoplasm. The enzyme catalyses adenosine(1518)/adenosine(1519) in 16S rRNA + 4 S-adenosyl-L-methionine = N(6)-dimethyladenosine(1518)/N(6)-dimethyladenosine(1519) in 16S rRNA + 4 S-adenosyl-L-homocysteine + 4 H(+). In terms of biological role, specifically dimethylates two adjacent adenosines (A1518 and A1519) in the loop of a conserved hairpin near the 3'-end of 16S rRNA in the 30S particle. May play a critical role in biogenesis of 30S subunits. This chain is Ribosomal RNA small subunit methyltransferase A, found in Malacoplasma penetrans (strain HF-2) (Mycoplasma penetrans).